The sequence spans 78 residues: Major outer membrane lipoprotein Lpp (78 aa).

A signal peptide spans 1–20; the sequence is MNRTKLVLGAVILASTMLAG. Cys21 is lipidated: N-palmitoyl cysteine. The S-diacylglycerol cysteine moiety is linked to residue Cys21. 2 repeats span residues 24-34 and 38-48; these read NAKIDQLSSDV and NAKVDQLSNDV. Positions 27 to 75 form a coiled coil; it reads IDQLSSDVQTLNAKVDQLSNDVNAVRADVQAAKDDAARANQRLDNQAQA. Lys78 bears the N6-murein peptidoglycan lysine mark.

Belongs to the Lpp family. Homotrimer.

It localises to the cell outer membrane. The protein localises to the secreted. The protein resides in the cell wall. A highly abundant outer membrane lipoprotein that controls the distance between the inner and outer membranes. The only protein known to be covalently linked to the peptidoglycan network (PGN). Also non-covalently binds the PGN. The link between the cell outer membrane and PGN contributes to maintenance of the structural and functional integrity of the cell envelope, and maintains the correct distance between the PGN and the outer membrane. The polypeptide is Major outer membrane lipoprotein Lpp (Yersinia pestis).